We begin with the raw amino-acid sequence, 573 residues long: Glutathione hydrolase 5 proenzyme (573 aa).

The Cytoplasmic portion of the chain corresponds to 1–8 (MAWGHRAT). A helical; Signal-anchor for type II membrane protein membrane pass occupies residues 9-29 (VCLVLLGVGLGLVIVVLAAVL). At 30–573 (SPRQASCGPG…LRKAGKASGY (544 aa)) the chain is on the extracellular side. N-linked (GlcNAc...) asparagine glycosylation occurs at Asn-98. Position 110 (Arg-110) interacts with L-glutamate. 6 N-linked (GlcNAc...) asparagine glycosylation sites follow: Asn-185, Asn-204, Asn-277, Asn-303, Asn-347, and Asn-378. Residue Thr-389 is the Nucleophile of the active site. Residues Thr-407, Glu-428, and 454–455 (SS) contribute to the L-glutamate site.

This sequence belongs to the gamma-glutamyltransferase family. Heterodimer composed of the light and heavy chains. The active site is located in the light chain. Cleaved by autocatalysis into a large and a small subunit. In terms of processing, glycosylated. Very low level of expression. Detected in spleen lymphocytes, medullary and paracortical thymic lymphocytes, lung interstitial cells, bronchial epithelium, proximal tubules in kidney, crypt cells in small intestine, neurons in brain stem and cerebral cortex and in Purkinje cells. In terms of tissue distribution, very low expression.

It localises to the membrane. The enzyme catalyses glutathione + H2O = L-cysteinylglycine + L-glutamate. It carries out the reaction an S-substituted glutathione + H2O = an S-substituted L-cysteinylglycine + L-glutamate. The catalysed reaction is leukotriene C4 + H2O = leukotriene D4 + L-glutamate. It catalyses the reaction S-[(2E,6E,10E)-geranylgeranyl]-L-glutathione + H2O = S-[(2E,6E,10E)-geranylgeranyl]-L-cysteinylglycine + L-glutamate. The enzyme catalyses an N-terminal (5-L-glutamyl)-[peptide] + an alpha-amino acid = 5-L-glutamyl amino acid + an N-terminal L-alpha-aminoacyl-[peptide]. It participates in lipid metabolism; leukotriene D4 biosynthesis. Its pathway is sulfur metabolism; glutathione metabolism. With respect to regulation, inhibited by serine-borate. Functionally, cleaves the gamma-glutamyl bond of extracellular glutathione tripeptide (gamma-Glu-Cys-Gly) and certain glutathione conjugates. Hydrolyzes glutathione releasing L-Glu and Cys-Gly dipeptide which is further metabolized to maintain extracellular cysteine levels but also to provide cysteine necessary for intracellular glutathione synthesis. Among glutathione-S-conjugates metabolizes leukotriene C4 (LTC4) and S-geranylgeranyl-glutathione (GGG), but is inactive toward gamma-glutamyl leucine. Converts extracellular LTC4 to LTD4 during acute inflammatory response. Acts as a negative regulator of GGG bioactivity. GGT5 (via GGG catabolism) and ABCC1 (via extracellular transport) establish GGG gradients within lymphoid tissues to position P2RY8-positive lymphocytes at germinal centers in lymphoid follicles and restrict their chemotactic transmigration from blood vessels to bone marrow parenchyma. The transpeptidation reaction, i.e. the transfer of gamma-glutamyl moiety to an acceptor molecule to yield a new gamma-glutamyl compound requires high concentration of dipeptide acceptor and is considered nonphysiological. The polypeptide is Glutathione hydrolase 5 proenzyme (Ggt5) (Mus musculus (Mouse)).